The chain runs to 233 residues: Ribonuclease 3 (233 aa).

The region spanning 9 to 136 (LQHFWEQFHL…IIGSVYLSGG (128 aa)) is the RNase III domain. Residue glutamate 49 participates in Mg(2+) binding. Aspartate 53 is a catalytic residue. Mg(2+) contacts are provided by aspartate 122 and glutamate 125. Residue glutamate 125 is part of the active site. Positions 162 to 231 (DSKSALQEFV…ARAALALLKV (70 aa)) constitute a DRBM domain.

The protein belongs to the ribonuclease III family. Homodimer. Requires Mg(2+) as cofactor.

It localises to the cytoplasm. It carries out the reaction Endonucleolytic cleavage to 5'-phosphomonoester.. Digests double-stranded RNA. Involved in the processing of primary rRNA transcript to yield the immediate precursors to the large and small rRNAs (23S and 16S). Processes some mRNAs, and tRNAs when they are encoded in the rRNA operon. Processes pre-crRNA and tracrRNA of type II CRISPR loci if present in the organism. This chain is Ribonuclease 3, found in Moorella thermoacetica (strain ATCC 39073 / JCM 9320).